Reading from the N-terminus, the 95-residue chain is Large ribosomal subunit protein uL23 (95 aa).

The protein belongs to the universal ribosomal protein uL23 family. As to quaternary structure, part of the 50S ribosomal subunit. Contacts protein L29, and trigger factor when it is bound to the ribosome.

In terms of biological role, one of the early assembly proteins it binds 23S rRNA. One of the proteins that surrounds the polypeptide exit tunnel on the outside of the ribosome. Forms the main docking site for trigger factor binding to the ribosome. The chain is Large ribosomal subunit protein uL23 from Desulfitobacterium hafniense (strain Y51).